The chain runs to 179 residues: MARLKDMYKSEVAPAMMEKFGYKSVMEIPKIEKIVVNMGLGDSKDNPKGLEAAVKELGIITGQKPVVTRAKKSVANFKLRQGMPIGAKVTLRGEKMYEFADRLLNIALPRVRDFRGVNPNAFDGRGNYALGIKEQLIFPEIEYDKVEKLHGMDIIFVTTAKTDEESRELLKLMGMPFAK.

The protein belongs to the universal ribosomal protein uL5 family. As to quaternary structure, part of the 50S ribosomal subunit; part of the 5S rRNA/L5/L18/L25 subcomplex. Contacts the 5S rRNA and the P site tRNA. Forms a bridge to the 30S subunit in the 70S ribosome.

Functionally, this is one of the proteins that bind and probably mediate the attachment of the 5S RNA into the large ribosomal subunit, where it forms part of the central protuberance. In the 70S ribosome it contacts protein S13 of the 30S subunit (bridge B1b), connecting the 2 subunits; this bridge is implicated in subunit movement. Contacts the P site tRNA; the 5S rRNA and some of its associated proteins might help stabilize positioning of ribosome-bound tRNAs. This Alkaliphilus oremlandii (strain OhILAs) (Clostridium oremlandii (strain OhILAs)) protein is Large ribosomal subunit protein uL5.